A 141-amino-acid chain; its full sequence is Hemoglobin subunit alpha (141 aa).

The Globin domain occupies 1 to 141 (VLSPADKNNV…VSTVLTSKYR (141 aa)). At S3 the chain carries Phosphoserine. K7 and K11 each carry N6-succinyllysine. K16 carries the N6-acetyllysine; alternate modification. K16 carries the N6-succinyllysine; alternate modification. Y24 carries the post-translational modification Phosphotyrosine. S35 is modified (phosphoserine). Residue K40 is modified to N6-succinyllysine. Phosphoserine is present on S49. H58 contacts O2. Residue H87 coordinates heme b. S102 carries the post-translational modification Phosphoserine. Position 108 is a phosphothreonine (T108). A phosphoserine mark is found at S124 and S131. Phosphothreonine is present on residues T134 and T137. At S138 the chain carries Phosphoserine.

This sequence belongs to the globin family. As to quaternary structure, heterotetramer of two alpha chains and two beta chains. Red blood cells.

Functionally, involved in oxygen transport from the lung to the various peripheral tissues. In terms of biological role, hemopressin acts as an antagonist peptide of the cannabinoid receptor CNR1. Hemopressin-binding efficiently blocks cannabinoid receptor CNR1 and subsequent signaling. This Urocitellus townsendii (Townsend's ground squirrel) protein is Hemoglobin subunit alpha (HBA).